Here is a 357-residue protein sequence, read N- to C-terminus: Putative ankyrin repeat protein L42 (357 aa).

ANK repeat units follow at residues Ser34–Phe63, Glu86–Met115, Asn116–Ala145, Asn147–Ser175, Lys176–Val205, Gly206–Lys235, Ser237–Ile265, Tyr267–Asp294, and Asn301–Lys331.

The sequence is that of Putative ankyrin repeat protein L42 from Acanthamoeba polyphaga (Amoeba).